The following is a 152-amino-acid chain: HMG-Y-related protein B (152 aa).

The region spanning 1-54 (ALNEADGSNKSAISKYIETTYGELPDETVLGSHLNKMKESGELAFKQNNYMKAD) is the H15 domain. Residues 40–152 (SGELAFKQNN…PQLTEVSVES (113 aa)) form a disordered region. DNA-binding regions (a.T hook) lie at residues 60-68 (KRGRGRPPK), 82-90 (PRPRGRPPK), 108-116 (GRPRGRPKK), and 132-140 (GRPRGRPPK).

Belongs to the HMGA family.

It is found in the nucleus. This chain is HMG-Y-related protein B, found in Glycine max (Soybean).